Here is a 417-residue protein sequence, read N- to C-terminus: Gamma-glutamyl phosphate reductase (417 aa).

This sequence belongs to the gamma-glutamyl phosphate reductase family.

It localises to the cytoplasm. It catalyses the reaction L-glutamate 5-semialdehyde + phosphate + NADP(+) = L-glutamyl 5-phosphate + NADPH + H(+). It participates in amino-acid biosynthesis; L-proline biosynthesis; L-glutamate 5-semialdehyde from L-glutamate: step 2/2. Its function is as follows. Catalyzes the NADPH-dependent reduction of L-glutamate 5-phosphate into L-glutamate 5-semialdehyde and phosphate. The product spontaneously undergoes cyclization to form 1-pyrroline-5-carboxylate. This Escherichia coli O17:K52:H18 (strain UMN026 / ExPEC) protein is Gamma-glutamyl phosphate reductase.